We begin with the raw amino-acid sequence, 255 residues long: 5-oxoprolinase subunit A (255 aa).

This sequence belongs to the LamB/PxpA family. In terms of assembly, forms a complex composed of PxpA, PxpB and PxpC.

The enzyme catalyses 5-oxo-L-proline + ATP + 2 H2O = L-glutamate + ADP + phosphate + H(+). Functionally, catalyzes the cleavage of 5-oxoproline to form L-glutamate coupled to the hydrolysis of ATP to ADP and inorganic phosphate. This chain is 5-oxoprolinase subunit A, found in Campylobacter jejuni subsp. jejuni serotype O:6 (strain 81116 / NCTC 11828).